Here is a 312-residue protein sequence, read N- to C-terminus: Small ribosomal subunit protein uS2 (312 aa).

Residues 232–312 form a disordered region; sequence RASGAAERDE…AAPEGEAAAE (81 aa). Residues 245–284 show a composition bias toward basic and acidic residues; sequence REGRDDRGDRRDDRRGPRRGDRRDDRRDRGGDRGGDRRGP. The segment covering 291-312 has biased composition (low complexity); that stretch reads AAPVASAEPAAEAAPEGEAAAE.

The protein belongs to the universal ribosomal protein uS2 family.

This chain is Small ribosomal subunit protein uS2, found in Myxococcus xanthus (strain DK1622).